Reading from the N-terminus, the 255-residue chain is Thiazole synthase (255 aa).

The active-site Schiff-base intermediate with DXP is the Lys-96. 1-deoxy-D-xylulose 5-phosphate contacts are provided by residues Gly-157, 183-184 (AG), and 205-206 (NT).

Belongs to the ThiG family. In terms of assembly, homotetramer. Forms heterodimers with either ThiH or ThiS.

It localises to the cytoplasm. It catalyses the reaction [ThiS sulfur-carrier protein]-C-terminal-Gly-aminoethanethioate + 2-iminoacetate + 1-deoxy-D-xylulose 5-phosphate = [ThiS sulfur-carrier protein]-C-terminal Gly-Gly + 2-[(2R,5Z)-2-carboxy-4-methylthiazol-5(2H)-ylidene]ethyl phosphate + 2 H2O + H(+). It participates in cofactor biosynthesis; thiamine diphosphate biosynthesis. Functionally, catalyzes the rearrangement of 1-deoxy-D-xylulose 5-phosphate (DXP) to produce the thiazole phosphate moiety of thiamine. Sulfur is provided by the thiocarboxylate moiety of the carrier protein ThiS. In vitro, sulfur can be provided by H(2)S. In Heliobacterium modesticaldum (strain ATCC 51547 / Ice1), this protein is Thiazole synthase.